The chain runs to 518 residues: MNIQTQAFIAVTAQPIPYYADTTAIFNTLCQSNSNSLLLDSAEIGSKNSLQSLILVNAAVKITCLGHNVTFKALNNNGKQVLKEIHPKLTALGKVSAVNFEDEFSVQFLPLDNQLDEDSKLQSATIFDGLRVISSLYQHSQTPIFLGGLFAYDLVANFIPMDGITLKNDGINCPDYSFYLAEHLITIDHQNQQATLKSFCFAQEEQVNIAKTSLSIAQKLKNIDHVLSIKAASDEVKTNFDDPEFTGIVKALKHHINIGDVFQIVPSRRFSLACPNTLASYAQLKQNNPSPYMFYMNDEDFILFGASPESALKYAPENRQLEIYPIAGSRPRGFDAHGNIDPELDARLELELRLDHKEQAEHLMLVDLARNDIARVCQSGTRKVAELMQVDRYSHIMHLVSRVVGKLRPELDALHAYQACMNMGTLTGAPKIKAMQLIYQFEQQKRHSYGGAVGYLTSDGHFDTCIVIRSAFVQNGMAHVQAGCGEVLDSDPQMEADETRHKAAAVLKAIRQVNTQAK.

Residues Ser41 and 291-293 contribute to the L-tryptophan site; that span reads PYM. Residue 328–329 participates in chorismate binding; that stretch reads GS. Residue Glu361 coordinates Mg(2+). Residues Tyr449, Arg469, 483–485, and Gly485 contribute to the chorismate site; that span reads GCG. Glu498 provides a ligand contact to Mg(2+).

It belongs to the anthranilate synthase component I family. Heterotetramer consisting of two non-identical subunits: a beta subunit (TrpG) and a large alpha subunit (TrpE). It depends on Mg(2+) as a cofactor.

The catalysed reaction is chorismate + L-glutamine = anthranilate + pyruvate + L-glutamate + H(+). The protein operates within amino-acid biosynthesis; L-tryptophan biosynthesis; L-tryptophan from chorismate: step 1/5. With respect to regulation, feedback inhibited by tryptophan. In terms of biological role, part of a heterotetrameric complex that catalyzes the two-step biosynthesis of anthranilate, an intermediate in the biosynthesis of L-tryptophan. In the first step, the glutamine-binding beta subunit (TrpG) of anthranilate synthase (AS) provides the glutamine amidotransferase activity which generates ammonia as a substrate that, along with chorismate, is used in the second step, catalyzed by the large alpha subunit of AS (TrpE) to produce anthranilate. In the absence of TrpG, TrpE can synthesize anthranilate directly from chorismate and high concentrations of ammonia. In Haemophilus influenzae (strain ATCC 51907 / DSM 11121 / KW20 / Rd), this protein is Anthranilate synthase component 1 (trpE).